The primary structure comprises 56 residues: Small ribosomal subunit protein uS14 (56 aa).

Positions 21, 24, 39, and 42 each coordinate Zn(2+).

It belongs to the universal ribosomal protein uS14 family. Requires Zn(2+) as cofactor.

This is Small ribosomal subunit protein uS14 (RPS29) from Griffithsia japonica (Red alga).